Reading from the N-terminus, the 118-residue chain is Large ribosomal subunit protein uL18 (118 aa).

The span at 1–10 (MKTTRRDATR) shows a compositional bias: basic and acidic residues. The interval 1–20 (MKTTRRDATRSRHQRVRRKV) is disordered. Residues 11 to 20 (SRHQRVRRKV) show a composition bias toward basic residues.

This sequence belongs to the universal ribosomal protein uL18 family. In terms of assembly, part of the 50S ribosomal subunit; part of the 5S rRNA/L5/L18/L25 subcomplex. Contacts the 5S and 23S rRNAs.

This is one of the proteins that bind and probably mediate the attachment of the 5S RNA into the large ribosomal subunit, where it forms part of the central protuberance. The chain is Large ribosomal subunit protein uL18 from Acaryochloris marina (strain MBIC 11017).